Reading from the N-terminus, the 278-residue chain is Pantothenate synthetase (278 aa).

An ATP-binding site is contributed by 26 to 33; that stretch reads MGNLHEGH. His33 functions as the Proton donor in the catalytic mechanism. Gln57 serves as a coordination point for (R)-pantoate. Position 57 (Gln57) interacts with beta-alanine. 144–147 provides a ligand contact to ATP; sequence GKKD. Gln150 lines the (R)-pantoate pocket. ATP contacts are provided by residues Gly173 and 181–184; that span reads LSSR.

The protein belongs to the pantothenate synthetase family. In terms of assembly, homodimer.

The protein localises to the cytoplasm. It catalyses the reaction (R)-pantoate + beta-alanine + ATP = (R)-pantothenate + AMP + diphosphate + H(+). The protein operates within cofactor biosynthesis; (R)-pantothenate biosynthesis; (R)-pantothenate from (R)-pantoate and beta-alanine: step 1/1. Its function is as follows. Catalyzes the condensation of pantoate with beta-alanine in an ATP-dependent reaction via a pantoyl-adenylate intermediate. This chain is Pantothenate synthetase, found in Neisseria meningitidis serogroup B (strain ATCC BAA-335 / MC58).